The following is a 447-amino-acid chain: N-succinylarginine dihydrolase (447 aa).

Substrate contacts are provided by residues Ala19–Ser28, Asn110, and His137–Arg138. Glu174 is an active-site residue. Arg212 lines the substrate pocket. His248 is a catalytic residue. Asp250 and Asn359 together coordinate substrate. Cys365 functions as the Nucleophile in the catalytic mechanism.

It belongs to the succinylarginine dihydrolase family. In terms of assembly, homodimer.

It carries out the reaction N(2)-succinyl-L-arginine + 2 H2O + 2 H(+) = N(2)-succinyl-L-ornithine + 2 NH4(+) + CO2. Its pathway is amino-acid degradation; L-arginine degradation via AST pathway; L-glutamate and succinate from L-arginine: step 2/5. In terms of biological role, catalyzes the hydrolysis of N(2)-succinylarginine into N(2)-succinylornithine, ammonia and CO(2). This Escherichia coli (strain ATCC 8739 / DSM 1576 / NBRC 3972 / NCIMB 8545 / WDCM 00012 / Crooks) protein is N-succinylarginine dihydrolase.